A 301-amino-acid chain; its full sequence is MKNDKKIYGCIEGGGTKFMLALIDSDRKMLAVERVPTTTPEETLGKSVEFFKKALPQYADSFASFGIASFGPLCLDRKSPKWGYITNTPKPFWPNTDVVTPFKEAFGCPVEIDTDVNGAALAENFWGASKGTHTSVYVTVGTGFGGGVLIDGKPIHGLAHPEMGHGIPIRHPDDRDFEGCCPYHGGCYEGLASGTAIRKRWGKALNEMEPAEFEKAREIIAFYLAHFNVTLQAFISPERIVFGGGVMHVDGMLASVRRQTAEIANSYFEGADFEKIIVLPGLGDQAGMMGAFALALAAENK.

Positions 165, 181, 184, and 187 each coordinate Zn(2+).

It belongs to the ROK (NagC/XylR) family. Mg(2+) serves as cofactor.

The catalysed reaction is D-fructose + ATP = D-fructose 6-phosphate + ADP + H(+). Inhibition by zinc ions. In Zymomonas mobilis subsp. mobilis (strain ATCC 31821 / ZM4 / CP4), this protein is Fructokinase (frk).